The sequence spans 539 residues: Probable methionine--tRNA ligase, mitochondrial (539 aa).

Positions 28-38 (FYVNAAPHLGH) match the 'HIGH' region motif. Positions 326 to 330 (KMSKS) match the 'KMSKS' region motif. Lys329 is an ATP binding site.

Belongs to the class-I aminoacyl-tRNA synthetase family.

The protein resides in the mitochondrion matrix. It catalyses the reaction tRNA(Met) + L-methionine + ATP = L-methionyl-tRNA(Met) + AMP + diphosphate. The chain is Probable methionine--tRNA ligase, mitochondrial from Schizosaccharomyces pombe (strain 972 / ATCC 24843) (Fission yeast).